A 460-amino-acid polypeptide reads, in one-letter code: NADH-ubiquinone oxidoreductase chain 4 (460 aa).

12 consecutive transmembrane segments (helical) span residues 20–42 (PKWL…LTWL), 61–81 (PLST…VLAS), 93–113 (QRLY…AFGA), 114–134 (TEII…LIII), 148–168 (TYFL…LLLL), 195–215 (IWWA…GVHL), 225–245 (PVAG…YGMM), 258–278 (LAYP…SICL), 285–304 (SLIA…GILI), 309–331 (GFTG…FCLA), 351–371 (MIFP…LALP), and 394–414 (IILT…LFLM).

Belongs to the complex I subunit 4 family.

Its subcellular location is the mitochondrion membrane. It catalyses the reaction a ubiquinone + NADH + 5 H(+)(in) = a ubiquinol + NAD(+) + 4 H(+)(out). Its function is as follows. Core subunit of the mitochondrial membrane respiratory chain NADH dehydrogenase (Complex I) that is believed to belong to the minimal assembly required for catalysis. Complex I functions in the transfer of electrons from NADH to the respiratory chain. The immediate electron acceptor for the enzyme is believed to be ubiquinone. The protein is NADH-ubiquinone oxidoreductase chain 4 (MT-ND4) of Formosania lacustris (Oriental stream loach).